The following is a 119-amino-acid chain: Iron-sulfur cluster insertion protein ErpA (119 aa).

3 residues coordinate iron-sulfur cluster: C47, C111, and C113.

The protein belongs to the HesB/IscA family. As to quaternary structure, homodimer. Requires iron-sulfur cluster as cofactor.

Functionally, required for insertion of 4Fe-4S clusters for at least IspG. This is Iron-sulfur cluster insertion protein ErpA from Blochmanniella floridana.